Here is a 592-residue protein sequence, read N- to C-terminus: 3-hydroxy-3-methylglutaryl-coenzyme A reductase 1 (592 aa).

The interval 1-45 (MDLRRRPPKPPVTNNNNSNGSFRSYQPRTSDDDHRRRATTIAPPP) is disordered. Residues 12–28 (VTNNNNSNGSFRSYQPR) are compositionally biased toward polar residues. N-linked (GlcNAc...) asparagine glycosylation is found at N16 and N19. 2 helical membrane passes run 47–69 (ASDA…FFSV) and 97–117 (AIIA…IDFV). Residues 118–171 (QSFISRASGDAWDLADTIDDDDHRLVTCSPPTPIVSVAKLPNPEPIVTESLPEE) are linker. The interval 172 to 592 (DEEIVKSVID…GATTTTTTTT (421 aa)) is catalytic. E265 functions as the Charge relay system in the catalytic mechanism. N-linked (GlcNAc...) asparagine glycosylation occurs at N329. Active-site charge relay system residues include K397 and D473. H571 functions as the Proton donor in the catalytic mechanism. N575 is a glycosylation site (N-linked (GlcNAc...) asparagine). Phosphoserine is present on S577.

It belongs to the HMG-CoA reductase family. As to quaternary structure, interacts (via N-terminus) with B''ALPHA and B''BETA. Post-translationally, inactivated by phosphorylation at Ser-577 by KIN10 activated form. Probably also phosphorylated at additional sites. Found in all tissues. Isoform Short is expressed at low levels specifically in flowers. Expressed in both the tapetum and microspores.

It is found in the endoplasmic reticulum membrane. It carries out the reaction (R)-mevalonate + 2 NADP(+) + CoA = (3S)-3-hydroxy-3-methylglutaryl-CoA + 2 NADPH + 2 H(+). It participates in metabolic intermediate biosynthesis; (R)-mevalonate biosynthesis; (R)-mevalonate from acetyl-CoA: step 3/3. With respect to regulation, regulated at the post-translational level in response to alterations of sphingolipid and sterol biosynthetic pathways. Negatively regulated by a PP2A-dependent dephosphorylation occurring at a site different than Ser-577. Completely inhibited by mevinolin (IC(50) = 12.5 nM). Reversibly inactivated by phosphorylation at Ser-577 by spinach or Brassica oleracea HMGR kinases in a cell-free system. Down-regulated by KIN10 through its phosphorylation at Ser-577. Its function is as follows. Catalyzes the synthesis of mevalonate, the specific precursor of all isoprenoid compounds present in plants. This Arabidopsis thaliana (Mouse-ear cress) protein is 3-hydroxy-3-methylglutaryl-coenzyme A reductase 1.